We begin with the raw amino-acid sequence, 103 residues long: Large ribosomal subunit protein uL24 (103 aa).

Belongs to the universal ribosomal protein uL24 family. As to quaternary structure, part of the 50S ribosomal subunit.

Functionally, one of two assembly initiator proteins, it binds directly to the 5'-end of the 23S rRNA, where it nucleates assembly of the 50S subunit. One of the proteins that surrounds the polypeptide exit tunnel on the outside of the subunit. In Corynebacterium urealyticum (strain ATCC 43042 / DSM 7109), this protein is Large ribosomal subunit protein uL24.